Consider the following 257-residue polypeptide: Type III pantothenate kinase (257 aa).

6-13 (DCGNTNTV) contributes to the ATP binding site. Substrate is bound at residue 107 to 110 (GPDR). Residue Asp109 is the Proton acceptor of the active site. Asp129 is a K(+) binding site. Thr132 provides a ligand contact to ATP. Thr184 is a binding site for substrate.

This sequence belongs to the type III pantothenate kinase family. Homodimer. The cofactor is NH4(+). It depends on K(+) as a cofactor.

Its subcellular location is the cytoplasm. The enzyme catalyses (R)-pantothenate + ATP = (R)-4'-phosphopantothenate + ADP + H(+). It functions in the pathway cofactor biosynthesis; coenzyme A biosynthesis; CoA from (R)-pantothenate: step 1/5. Its function is as follows. Catalyzes the phosphorylation of pantothenate (Pan), the first step in CoA biosynthesis. This Cereibacter sphaeroides (strain ATCC 17025 / ATH 2.4.3) (Rhodobacter sphaeroides) protein is Type III pantothenate kinase.